Here is a 100-residue protein sequence, read N- to C-terminus: Small ribosomal subunit protein uS14m (100 aa).

This sequence belongs to the universal ribosomal protein uS14 family.

It localises to the mitochondrion. This chain is Small ribosomal subunit protein uS14m (RPS14), found in Brassica napus (Rape).